A 504-amino-acid polypeptide reads, in one-letter code: Outer capsid protein VP5 (504 aa).

Positions 1-42 are involved in membrane permeabilization; it reads MGKFTSFLKRAGSATKNALTSDAAKRMYKMAGKTLQKVVESE.

It belongs to the orbivirus VP5 family.

It localises to the virion. Its function is as follows. VP5 protein is one of the two proteins (with VP2) which constitute the virus particle outer capsid. Acts as a membrane permeabilization protein that mediates release of viral particles from endosomal compartments into the cytoplasm. Permeabilization activity is probably negatively regulated by VP2 and is triggered by endosomal degradation of VP2 and exposure to low pH. This chain is Outer capsid protein VP5 (Segment-6), found in African horse sickness virus 6 (AHSV-6).